The sequence spans 1008 residues: Probable transport protein MmpL10 (1008 aa).

Transmembrane regions (helical) follow at residues 23-43 (WPWV…MTVP), 202-222 (IELV…RNPI), 225-245 (LLPL…VSGV), 257-277 (MIVL…VFLI), 301-321 (ALIS…ITFL), 340-360 (IGIA…LVLA), 389-409 (VAYL…ASLV), 835-855 (DLQL…MALL), 862-882 (IYLV…CVLV), 895-915 (VPGL…MLLA), 940-960 (VITA…LSSI), and 961-981 (ATVV…TFIV).

The protein belongs to the resistance-nodulation-cell division (RND) (TC 2.A.6) family. MmpL subfamily.

It is found in the cell membrane. This Mycobacterium leprae (strain TN) protein is Probable transport protein MmpL10 (mmpL10).